Consider the following 325-residue polypeptide: Urease accessory protein UreD (325 aa).

Belongs to the UreD family. In terms of assembly, ureD, UreF and UreG form a complex that acts as a GTP-hydrolysis-dependent molecular chaperone, activating the urease apoprotein by helping to assemble the nickel containing metallocenter of UreC. The UreE protein probably delivers the nickel.

It is found in the cytoplasm. Required for maturation of urease via the functional incorporation of the urease nickel metallocenter. Functionally, expression of the urease operon increases the likelihood of bacterial survival by contributing to acid resistance in vitro and in vivo in BALB/c mice. Y.enterocolitica enters the body via an oral path and must survive the acidic stomach before being able to colonize the intestinal mucosa. This Yersinia enterocolitica protein is Urease accessory protein UreD.